The primary structure comprises 226 residues: ATP synthase subunit a (226 aa).

The next 6 helical transmembrane spans lie at 22–42, 73–93, 102–122, 135–155, 173–193, and 202–222; these read SMNW…FWLI, IIIF…SLIP, LLLN…YLIY, LNSP…SLII, LILT…PINL, and LEIF…ILYF.

It belongs to the ATPase A chain family. As to quaternary structure, F-type ATPases have 2 components, CF(1) - the catalytic core - and CF(0) - the membrane proton channel. CF(1) has five subunits: alpha(3), beta(3), gamma(1), delta(1), epsilon(1). CF(0) has three main subunits: a, b and c.

The protein localises to the mitochondrion inner membrane. Functionally, mitochondrial membrane ATP synthase (F(1)F(0) ATP synthase or Complex V) produces ATP from ADP in the presence of a proton gradient across the membrane which is generated by electron transport complexes of the respiratory chain. F-type ATPases consist of two structural domains, F(1) - containing the extramembraneous catalytic core and F(0) - containing the membrane proton channel, linked together by a central stalk and a peripheral stalk. During catalysis, ATP synthesis in the catalytic domain of F(1) is coupled via a rotary mechanism of the central stalk subunits to proton translocation. Key component of the proton channel; it may play a direct role in the translocation of protons across the membrane. The sequence is that of ATP synthase subunit a (ATP6) from Apis mellifera ligustica (Common honeybee).